Consider the following 233-residue polypeptide: Uracil-DNA glycosylase (233 aa).

Asp-70 acts as the Proton acceptor in catalysis.

The protein belongs to the uracil-DNA glycosylase (UDG) superfamily. UNG family.

It localises to the cytoplasm. The catalysed reaction is Hydrolyzes single-stranded DNA or mismatched double-stranded DNA and polynucleotides, releasing free uracil.. Excises uracil residues from the DNA which can arise as a result of misincorporation of dUMP residues by DNA polymerase or due to deamination of cytosine. This is Uracil-DNA glycosylase from Helicobacter pylori (strain HPAG1).